Reading from the N-terminus, the 425-residue chain is Glutamyl-tRNA reductase (425 aa).

Residues 47–50, Ser107, 112–114, and Gln118 contribute to the substrate site; these read TCNR and EDQ. Cys48 acts as the Nucleophile in catalysis. 187–192 contributes to the NADP(+) binding site; the sequence is GAGHMA.

It belongs to the glutamyl-tRNA reductase family. In terms of assembly, homodimer.

The enzyme catalyses (S)-4-amino-5-oxopentanoate + tRNA(Glu) + NADP(+) = L-glutamyl-tRNA(Glu) + NADPH + H(+). The protein operates within porphyrin-containing compound metabolism; protoporphyrin-IX biosynthesis; 5-aminolevulinate from L-glutamyl-tRNA(Glu): step 1/2. Its pathway is porphyrin-containing compound metabolism; chlorophyll biosynthesis. In terms of biological role, catalyzes the NADPH-dependent reduction of glutamyl-tRNA(Glu) to glutamate 1-semialdehyde (GSA). The sequence is that of Glutamyl-tRNA reductase from Roseiflexus castenholzii (strain DSM 13941 / HLO8).